A 772-amino-acid polypeptide reads, in one-letter code: Hyperosmolality-gated Ca2+ permeable channel 1.1 (772 aa).

Over M1–K5 the chain is Extracellular. Residues D6–L28 form a helical membrane-spanning segment. Topologically, residues R29 to R100 are cytoplasmic. Residues I101–P122 form a helical membrane-spanning segment. At V123–F159 the chain is on the extracellular side. N138 is a glycosylation site (N-linked (GlcNAc) asparagine). Residues W160 to E180 form a helical membrane-spanning segment. Residues Y181–L372 lie on the Cytoplasmic side of the membrane. Residues Q339–R344 form a cytoplasmic region required for homodimerization region. The chain crosses the membrane as a helical span at residues T373–Q398. Residues S399 to S424 lie on the Extracellular side of the membrane. The chain crosses the membrane as a helical span at residues L425–S450. The Cytoplasmic portion of the chain corresponds to K451–L461. A helical transmembrane segment spans residues E462 to G485. At A486–A509 the chain is on the extracellular side. The helical transmembrane segment at I510–P538 threads the bilayer. The Cytoplasmic segment spans residues L539–G566. The chain crosses the membrane as a helical span at residues F567–V587. Residue T588 is a topological domain, extracellular. A helical transmembrane segment spans residues P589 to Y606. The Cytoplasmic segment spans residues R607 to F624. A helical transmembrane segment spans residues W625–L647. The Extracellular portion of the chain corresponds to G648–A653. Residues S654–K674 form a helical membrane-spanning segment. Over G675 to V772 the chain is Cytoplasmic. Positions L686 to E688 are cytoplasmic region required for homodimerization. A disordered region spans residues K743–V772. Residues R748 to S763 show a composition bias toward polar residues.

The protein belongs to the CSC1 (TC 1.A.17) family. Homodimer. In terms of tissue distribution, expressed in leaves, flowers, roots and guard cells.

The protein localises to the cell membrane. Its activity is regulated as follows. Activated by mechanical pressure. Its function is as follows. Acts as a hyperosmolarity-gated non-selective cation channel that permeates Ca(2+) ions. Shows the following permeability sequence: K(+) &gt; Ba(2+) = Ca(2+) &gt; Na(+) = Mg(2+) = Cs(+). Mechanosensitive ion channel that converts mechanical stimuli into a flow of ions: activated in response to membrane stretch and poke. In Arabidopsis thaliana (Mouse-ear cress), this protein is Hyperosmolality-gated Ca2+ permeable channel 1.1.